A 295-amino-acid chain; its full sequence is Ethanolamine ammonia-lyase small subunit (295 aa).

Residues Val209 and Glu230 each contribute to the adenosylcob(III)alamin site.

This sequence belongs to the EutC family. The basic unit is a heterodimer which dimerizes to form tetramers. The heterotetramers trimerize; 6 large subunits form a core ring with 6 small subunits projecting outwards. The cofactor is adenosylcob(III)alamin.

The protein resides in the bacterial microcompartment. It carries out the reaction ethanolamine = acetaldehyde + NH4(+). It functions in the pathway amine and polyamine degradation; ethanolamine degradation. In terms of biological role, catalyzes the deamination of various vicinal amino-alcohols to oxo compounds. Allows this organism to utilize ethanolamine as the sole source of nitrogen and carbon in the presence of external vitamin B12. The protein is Ethanolamine ammonia-lyase small subunit of Clostridium perfringens (strain ATCC 13124 / DSM 756 / JCM 1290 / NCIMB 6125 / NCTC 8237 / Type A).